A 363-amino-acid polypeptide reads, in one-letter code: Phosphatidylinositol transfer protein sfh-5 (363 aa).

Residues Met-1–Ser-84 are disordered. Residues Asp-36 to Lys-46 are compositionally biased toward basic and acidic residues. Residues Lys-64–Pro-76 show a composition bias toward low complexity. The CRAL-TRIO domain occupies Ala-180–Lys-354. Tyr-200, Arg-220, His-253, Tyr-255, and Lys-289 together coordinate heme.

The protein belongs to the SFH5 family. Heme b is required as a cofactor.

It localises to the cytoplasm. The protein resides in the endoplasmic reticulum membrane. The protein localises to the microsome membrane. The enzyme catalyses a 1,2-diacyl-sn-glycero-3-phospho-(1D-myo-inositol)(in) = a 1,2-diacyl-sn-glycero-3-phospho-(1D-myo-inositol)(out). Its function is as follows. Non-classical phosphatidylinositol (PtdIns) transfer protein (PITP), which exhibits PtdIns-binding/transfer activity in the absence of detectable PtdCho-binding/transfer activity. Regulates PtdIns(4,5)P2 homeostasis at the plasma membrane. Heme-binding protein that may play a role in organic oxidant-induced stress responses. This Neurospora crassa (strain ATCC 24698 / 74-OR23-1A / CBS 708.71 / DSM 1257 / FGSC 987) protein is Phosphatidylinositol transfer protein sfh-5 (sfh-5).